A 292-amino-acid chain; its full sequence is Acetylglutamate kinase (292 aa).

Residues Gly64 to Gly65, Arg86, and Asn190 contribute to the substrate site.

Belongs to the acetylglutamate kinase family. ArgB subfamily.

It is found in the cytoplasm. It catalyses the reaction N-acetyl-L-glutamate + ATP = N-acetyl-L-glutamyl 5-phosphate + ADP. It functions in the pathway amino-acid biosynthesis; L-arginine biosynthesis; N(2)-acetyl-L-ornithine from L-glutamate: step 2/4. Catalyzes the ATP-dependent phosphorylation of N-acetyl-L-glutamate. In Geotalea daltonii (strain DSM 22248 / JCM 15807 / FRC-32) (Geobacter daltonii), this protein is Acetylglutamate kinase.